The chain runs to 472 residues: MAGPSWGLPRLDGFILTERLGSGTYATVYKAYAKKDTREVVAIKCVAKKSLNKASVENLLTEIEILKGIRHPHIVQLKDFQWDNDNIYLIMEFCAGGDLSRFIHTRRILPEKVARVFMQQLASALQFLHERNISHLDLKPQNILLSSLEKPHLKLADFGFAQHMSPWDEKHVLRGSPLYMAPEMVCRRQYDARVDLWSVGVILYEALFGQPPFASRSFSELEEKIRSNRVIELPLRPQLSLDCRDLLQRLLERDPARRISFKDFFAHPWVDLEHMPSGESLAQARALVVEAVKKDQEGDAAAALSLYCKALDFFVPALHYEVDAQRKEAIKAKVGQYVSRAEELKAIVSSSNQALLRQGTTVQELLREMARDKPRLLAALEVASAALAKEEEAGKEQDALDLYQHSLGELLVLLAAEAPGRRRELLHTEVQNLMARAEYLKEQIKIRESHWEAESLDKEGLSESVRSSCTLQ.

In terms of domain architecture, Protein kinase spans 14–270 (FILTERLGSG…FKDFFAHPWV (257 aa)). ATP is bound by residues 20 to 28 (LGSGTYATV) and Lys-44. Asp-137 acts as the Proton acceptor in catalysis. Ser-176 bears the Phosphoserine mark. An MIT 1 domain is found at 280-348 (SLAQARALVV…SRAEELKAIV (69 aa)). Residues Ser-350, Ser-384, and Ser-464 each carry the phosphoserine; by autocatalysis modification. The MIT 2 domain maps to 375–444 (RLLAALEVAS…ARAEYLKEQI (70 aa)).

Belongs to the protein kinase superfamily. Ser/Thr protein kinase family. APG1/unc-51/ULK1 subfamily. In terms of assembly, interacts (via protein kinase domain) with SUFU. Autophosphorylated. Autophosphorylation is blocked by interaction with SUFU.

The protein localises to the cytoplasm. The catalysed reaction is L-seryl-[protein] + ATP = O-phospho-L-seryl-[protein] + ADP + H(+). It catalyses the reaction L-threonyl-[protein] + ATP = O-phospho-L-threonyl-[protein] + ADP + H(+). Serine/threonine protein kinase that acts as a regulator of Sonic hedgehog (SHH) signaling and autophagy. Acts as a negative regulator of SHH signaling in the absence of SHH ligand: interacts with SUFU, thereby inactivating the protein kinase activity and preventing phosphorylation of GLI proteins (GLI1, GLI2 and/or GLI3). Positively regulates SHH signaling in the presence of SHH: dissociates from SUFU, autophosphorylates and mediates phosphorylation of GLI2, activating it and promoting its nuclear translocation. Phosphorylates in vitro GLI2, as well as GLI1 and GLI3, although less efficiently. Also acts as a regulator of autophagy: following cellular senescence, able to induce autophagy. The polypeptide is Serine/threonine-protein kinase ULK3 (Ulk3) (Mus musculus (Mouse)).